A 276-amino-acid polypeptide reads, in one-letter code: Large ribosomal subunit protein uL2 (276 aa).

Residues 210 to 276 (GRNRHRGIRP…KLIISRRKGK (67 aa)) are disordered. The span at 230-240 (DHPHGGGEGKK) shows a compositional bias: basic and acidic residues. Residues 255 to 276 (KGAKTRRKKASDKLIISRRKGK) show a composition bias toward basic residues.

It belongs to the universal ribosomal protein uL2 family. In terms of assembly, part of the 50S ribosomal subunit. Forms a bridge to the 30S subunit in the 70S ribosome.

One of the primary rRNA binding proteins. Required for association of the 30S and 50S subunits to form the 70S ribosome, for tRNA binding and peptide bond formation. It has been suggested to have peptidyltransferase activity; this is somewhat controversial. Makes several contacts with the 16S rRNA in the 70S ribosome. The protein is Large ribosomal subunit protein uL2 of Campylobacter jejuni subsp. jejuni serotype O:6 (strain 81116 / NCTC 11828).